Reading from the N-terminus, the 535-residue chain is MRSSVSRQTYSTKGGFSSNSASGGSGSQARTSFSSVTVSRSSGSGGGAHCGPGTGGFGSRSLYNLGGHKSISVSVAGGALLGRALGGFGFGSRAFMGQGAGRQTFGPACPPGGIQEVTVNQSLLTPLHVEIDPEIQRVRTQEREQIKTLNNKFASFIDKVRFLEQQNKVLETKWALLQEQGQNLGVTRNNLEPLFEAYLGSMRSTLDRLQSERGRLDSELRNVQDLVEDFKNKYEDEINKHTAAENEFVVLKKDVDAAYMGRMDLHGKVGTLTQEIDFLQQLYEMELSQVQTHVSNTNVVLSMDNNRNLDLDSIIAEVKAQYELIAQRSRAEAEAWYQTKYEELQVTAGKHGDNLRDTKNEIAELTRTIQRLQGEADAAKKQCQQLQTAIAEAEQRGELALKDAQKKLGDLDVALHQAKEDLTRLLRDYQELMNVKLALDVEIATYRKLLESEESRMSGECPSAVSISVTGNSTTVCGGGAASFGGGISLGGSGGATKGGFSTNVGYSTVKGGPVSAGTSILRKTTTVKTSSQRY.

Residues 1-12 (MRSSVSRQTYST) are compositionally biased toward polar residues. The segment at 1-52 (MRSSVSRQTYSTKGGFSSNSASGGSGSQARTSFSSVTVSRSSGSGGGAHCGP) is disordered. Positions 1-141 (MRSSVSRQTY…DPEIQRVRTQ (141 aa)) are head. A compositionally biased stretch (low complexity) spans 32-42 (SFSSVTVSRSS). Positions 43-52 (GSGGGAHCGP) are enriched in gly residues. Positions 142–177 (EREQIKTLNNKFASFIDKVRFLEQQNKVLETKWALL) are coil 1A. Residues 142 to 457 (EREQIKTLNN…KLLESEESRM (316 aa)) enclose the IF rod domain. Residues 178-198 (QEQGQNLGVTRNNLEPLFEAY) are linker 1. The coil 1B stretch occupies residues 199–290 (LGSMRSTLDR…QLYEMELSQV (92 aa)). Residues 291 to 314 (QTHVSNTNVVLSMDNNRNLDLDSI) are linker 12. The interval 315-453 (IAEVKAQYEL…ATYRKLLESE (139 aa)) is coil 2. A tail region spans residues 454–535 (ESRMSGECPS…TTVKTSSQRY (82 aa)).

The protein belongs to the intermediate filament family. In terms of assembly, heterotetramer of two type I and two type II keratins. In terms of tissue distribution, expressed in skeletal muscle, skin and scalp, but not in any other tissues or organs examined.

The chain is Keratin, type II cytoskeletal 79 (KRT79) from Homo sapiens (Human).